A 722-amino-acid polypeptide reads, in one-letter code: Glycine--tRNA ligase beta subunit (722 aa).

It belongs to the class-II aminoacyl-tRNA synthetase family. As to quaternary structure, tetramer of two alpha and two beta subunits.

The protein resides in the cytoplasm. It catalyses the reaction tRNA(Gly) + glycine + ATP = glycyl-tRNA(Gly) + AMP + diphosphate. The chain is Glycine--tRNA ligase beta subunit (glyS) from Synechocystis sp. (strain ATCC 27184 / PCC 6803 / Kazusa).